The following is a 386-amino-acid chain: Phosphate acyltransferase (386 aa).

Positions 359-386 (PHRARQDELGENKVVGADQSMTAKATGT) are disordered. Positions 377–386 (QSMTAKATGT) are enriched in polar residues.

Belongs to the PlsX family. As to quaternary structure, homodimer. Probably interacts with PlsY.

Its subcellular location is the cytoplasm. It carries out the reaction a fatty acyl-[ACP] + phosphate = an acyl phosphate + holo-[ACP]. Its pathway is lipid metabolism; phospholipid metabolism. In terms of biological role, catalyzes the reversible formation of acyl-phosphate (acyl-PO(4)) from acyl-[acyl-carrier-protein] (acyl-ACP). This enzyme utilizes acyl-ACP as fatty acyl donor, but not acyl-CoA. This Beijerinckia indica subsp. indica (strain ATCC 9039 / DSM 1715 / NCIMB 8712) protein is Phosphate acyltransferase.